Consider the following 265-residue polypeptide: Undecaprenyl-diphosphatase (265 aa).

7 consecutive transmembrane segments (helical) span residues 42-62 (AATFDVVIQLGAIMAVVVLYW), 82-102 (GIVLLMLTSLPACILGLLLHA), 108-128 (LFRPATVLIALVVGAICMILV), 157-177 (LALWPGFSRSAATIMGGMLLG), 181-201 (PLAAEYSFIAAVPIMVAATGY), 217-237 (FFLVGMIGSFVSALLAVKVFV), and 244-264 (TLIPFACYRLLIAPFVYYFMV).

It belongs to the UppP family.

The protein resides in the cell inner membrane. It catalyses the reaction di-trans,octa-cis-undecaprenyl diphosphate + H2O = di-trans,octa-cis-undecaprenyl phosphate + phosphate + H(+). Its function is as follows. Catalyzes the dephosphorylation of undecaprenyl diphosphate (UPP). Confers resistance to bacitracin. The sequence is that of Undecaprenyl-diphosphatase from Desulfovibrio desulfuricans (strain ATCC 27774 / DSM 6949 / MB).